We begin with the raw amino-acid sequence, 213 residues long: Probable nicotinate-nucleotide adenylyltransferase (213 aa).

Belongs to the NadD family.

The enzyme catalyses nicotinate beta-D-ribonucleotide + ATP + H(+) = deamido-NAD(+) + diphosphate. It functions in the pathway cofactor biosynthesis; NAD(+) biosynthesis; deamido-NAD(+) from nicotinate D-ribonucleotide: step 1/1. Catalyzes the reversible adenylation of nicotinate mononucleotide (NaMN) to nicotinic acid adenine dinucleotide (NaAD). The polypeptide is Probable nicotinate-nucleotide adenylyltransferase (Ruegeria pomeroyi (strain ATCC 700808 / DSM 15171 / DSS-3) (Silicibacter pomeroyi)).